Reading from the N-terminus, the 151-residue chain is Large ribosomal subunit protein uL13 (151 aa).

Positions Y126 to R151 are disordered. Residues H131 to K140 show a composition bias toward basic and acidic residues.

Belongs to the universal ribosomal protein uL13 family. As to quaternary structure, part of the 50S ribosomal subunit.

Functionally, this protein is one of the early assembly proteins of the 50S ribosomal subunit, although it is not seen to bind rRNA by itself. It is important during the early stages of 50S assembly. This Trichodesmium erythraeum (strain IMS101) protein is Large ribosomal subunit protein uL13.